Consider the following 921-residue polypeptide: MEYKNTLLMPKTEFPMRGNLPKREPAMQEKWAEMNIYEKVQEHTKGRPLFVLHDGPPYANGDIHMGHALNKVLKDFIVRFKSMTGYCAPYVPGWDTHGLPIEQALTNKGVKRKEMTVAEFRKLCAEYAYEQVERQREQFKRLGVRADWDNPYITLEPAYEAQQIKVFGDMAKKGYIYKGQKPVYWSPTSESALAEAEIEYQDKKSASIYVAFPVKDGKNVLEGDEKYIIWTTTPWTLPANLGISVHPELEYAIVKVNDEKYIIASELFETVAKTLEWENAEVVKTVKGSELEYTVAKHPFYDRDSLVMLGEHVTTDAGTGCVHTAPGHGEDDFVVGKKYGLEVLCPVDDKGVLTNEAPGFEGLFYDKANKPITEKLEEVGALLKLTFITHSYPHDWRTKKPIIFRATAQWFASIEAFRKELLEAVAETKWVPAWGETRLHNMVRDRGDWCISRQRAWGVPIPVFYAENGDPIITDETINHVADLFREHGSNVWFEREAKDLLPEGFTHTGSPNGEFRKETDIMDVWFDSGSSHQAVLEEREDLQRPADLYLEGSDQYRGWFNSSLSTAVAVTGKAPYKGVLSHGFVLDGEGRKMSKSIGNIVVPKKIMDQLGGDILRLWVSSVDYQSDVRISDDILKQVAEVYRKIRNTFRFLLGNLDDFNPSENTVAVAELREVDRYMLVKLNDLITKVKDAYETYDFAAVYHAIHNFCTIDLSSFYLDFAKDILYIEGADHADRRAIQTVLYDVLVALTKLVTPILPHTADEVWPYVPGAEEESVQLTNMPEATEVEGSEALRAKWDAFMTLRDDVLKALEVARNEKVIGKSLNASITLYPTAEMKAMLESISEDLKQLFIVSEYKLGGTIEEAPTEAPKYEHTAVVVAQATGETCERCWVVSETIGKDAEHETLCERCATVVKENYVK.

Positions 57–67 (PYANGDIHMGH) match the 'HIGH' region motif. Glutamate 552 is an L-isoleucyl-5'-AMP binding site. The 'KMSKS' region motif lies at 593 to 597 (KMSKS). Lysine 596 is a binding site for ATP. Positions 888, 891, 908, and 911 each coordinate Zn(2+).

The protein belongs to the class-I aminoacyl-tRNA synthetase family. IleS type 1 subfamily. Monomer. Zn(2+) serves as cofactor.

It is found in the cytoplasm. The enzyme catalyses tRNA(Ile) + L-isoleucine + ATP = L-isoleucyl-tRNA(Ile) + AMP + diphosphate. In terms of biological role, catalyzes the attachment of isoleucine to tRNA(Ile). As IleRS can inadvertently accommodate and process structurally similar amino acids such as valine, to avoid such errors it has two additional distinct tRNA(Ile)-dependent editing activities. One activity is designated as 'pretransfer' editing and involves the hydrolysis of activated Val-AMP. The other activity is designated 'posttransfer' editing and involves deacylation of mischarged Val-tRNA(Ile). This chain is Isoleucine--tRNA ligase, found in Bacillus mycoides (strain KBAB4) (Bacillus weihenstephanensis).